We begin with the raw amino-acid sequence, 420 residues long: Protein Rv2184c (420 aa).

Belongs to the arsA ATPase family.

The protein is Protein Rv2184c of Mycobacterium tuberculosis (strain ATCC 25618 / H37Rv).